The primary structure comprises 424 residues: GTPase Obg (424 aa).

The region spanning 1 to 159 (MVFIDTARIY…MWVRLELKLL (159 aa)) is the Obg domain. Residues 160 to 330 (ADVGLVGFPN…LLDKTIEILS (171 aa)) form the OBG-type G domain. Residues 166–173 (GFPNAGKS), 191–195 (FTTLT), 212–215 (DIPG), 282–285 (NKMD), and 311–313 (SAL) each bind GTP. Positions 173 and 193 each coordinate Mg(2+). In terms of domain architecture, OCT spans 347 to 424 (NPPEEEETLE…VRDFEFEYYE (78 aa)).

The protein belongs to the TRAFAC class OBG-HflX-like GTPase superfamily. OBG GTPase family. In terms of assembly, monomer. The cofactor is Mg(2+).

Its subcellular location is the cytoplasm. An essential GTPase which binds GTP, GDP and possibly (p)ppGpp with moderate affinity, with high nucleotide exchange rates and a fairly low GTP hydrolysis rate. Plays a role in control of the cell cycle, stress response, ribosome biogenesis and in those bacteria that undergo differentiation, in morphogenesis control. The sequence is that of GTPase Obg from Caldanaerobacter subterraneus subsp. tengcongensis (strain DSM 15242 / JCM 11007 / NBRC 100824 / MB4) (Thermoanaerobacter tengcongensis).